Consider the following 128-residue polypeptide: Holo-[acyl-carrier-protein] synthase (128 aa).

D8 and E58 together coordinate Mg(2+).

The protein belongs to the P-Pant transferase superfamily. AcpS family. Requires Mg(2+) as cofactor.

It localises to the cytoplasm. It catalyses the reaction apo-[ACP] + CoA = holo-[ACP] + adenosine 3',5'-bisphosphate + H(+). Its function is as follows. Transfers the 4'-phosphopantetheine moiety from coenzyme A to a Ser of acyl-carrier-protein. This chain is Holo-[acyl-carrier-protein] synthase, found in Exiguobacterium sibiricum (strain DSM 17290 / CCUG 55495 / CIP 109462 / JCM 13490 / 255-15).